We begin with the raw amino-acid sequence, 692 residues long: Hexamerin-1.1 (692 aa).

The signal sequence occupies residues 1 to 18 (MKLLILAVAISLAVLASG). N203 carries N-linked (GlcNAc...) asparagine glycosylation.

Belongs to the hemocyanin family. In terms of assembly, homohexamer. In terms of tissue distribution, larval fat body.

It is found in the secreted. Its subcellular location is the extracellular space. Its function is as follows. Larval storage protein (LSP) which may serve as a store of amino acids for synthesis of adult proteins. The polypeptide is Hexamerin-1.1 (HexA) (Anopheles gambiae (African malaria mosquito)).